The following is a 144-amino-acid chain: MIPIKFKGRTISRGCAEGEVLISRDPISFLGSVDPRTGIVVEEKHSLAGKSIKGKVLVFPHGKGSTVGSYVMYQLKKNEAAPAAIINLETEPIVAVGAIISEIPLVDMLEKDPYEFLKDGDTVLVNGSEGYIELLKQGEGQAKK.

Serine 65 (proton acceptor) is an active-site residue.

The protein belongs to the AcnX type II small subunit family. Heterodimer composed of a large subunit (PMDh-L) and a small subunit (PMDh-S).

The catalysed reaction is (R)-5-phosphomevalonate = (2E)-3-methyl-5-phosphooxypent-2-enoate + H2O. The protein operates within isoprenoid biosynthesis; isopentenyl diphosphate biosynthesis via mevalonate pathway. Component of a hydro-lyase that catalyzes the dehydration of mevalonate 5-phosphate (MVA5P) to form trans-anhydromevalonate 5-phosphate (tAHMP). Involved in the archaeal mevalonate (MVA) pathway, which provides fundamental precursors for isoprenoid biosynthesis, such as isopentenyl diphosphate (IPP) and dimethylallyl diphosphate (DMAPP). This Methanosarcina mazei (strain ATCC BAA-159 / DSM 3647 / Goe1 / Go1 / JCM 11833 / OCM 88) (Methanosarcina frisia) protein is Phosphomevalonate dehydratase small subunit.